The following is a 108-amino-acid chain: Alkyltransferase-like protein 1 (108 aa).

This sequence belongs to the MGMT family. ATL subfamily.

Its function is as follows. Involved in DNA damage recognition. Binds DNA containing O(6)-methylguanine and larger O(6)-alkylguanine adducts. The DNA is bent, the damaged base is rotated out of the DNA duplex into a hydrophobic binding pocket (nucleotide flipping), with Arg-39 donating a hydrogen bond to the orphaned cytosine to stabilize the extrahelical DNA conformation. This structural change in DNA presents the lesion to the nucleotide excision repair (NER) pathway. The affinity for O(6)-alkylguanine adducts increases with the size of the alkyl group. Low affinity small O(6)-alkylguanines are directed to the global genome repair pathway of NER via rhp7-rhp16 and rhp41-rhp23, while strong binding to bulky O(6)-alkylguanines stalls the transcription machinery and diverts the damage to the transcription-coupled repair pathway of NER via rhp26. The polypeptide is Alkyltransferase-like protein 1 (Schizosaccharomyces pombe (strain 972 / ATCC 24843) (Fission yeast)).